The sequence spans 261 residues: 14-3-3-like protein B (261 aa).

The interval 237–261 (DIPEDGEDSQKANGTAKFGGGDDAE) is disordered.

It belongs to the 14-3-3 family.

The chain is 14-3-3-like protein B from Vicia faba (Broad bean).